Here is a 371-residue protein sequence, read N- to C-terminus: Anhydro-N-acetylmuramic acid kinase (371 aa).

G10–D17 is a binding site for ATP.

It belongs to the anhydro-N-acetylmuramic acid kinase family.

It carries out the reaction 1,6-anhydro-N-acetyl-beta-muramate + ATP + H2O = N-acetyl-D-muramate 6-phosphate + ADP + H(+). It functions in the pathway amino-sugar metabolism; 1,6-anhydro-N-acetylmuramate degradation. The protein operates within cell wall biogenesis; peptidoglycan recycling. Functionally, catalyzes the specific phosphorylation of 1,6-anhydro-N-acetylmuramic acid (anhMurNAc) with the simultaneous cleavage of the 1,6-anhydro ring, generating MurNAc-6-P. Is required for the utilization of anhMurNAc either imported from the medium or derived from its own cell wall murein, and thus plays a role in cell wall recycling. This chain is Anhydro-N-acetylmuramic acid kinase, found in Chromohalobacter salexigens (strain ATCC BAA-138 / DSM 3043 / CIP 106854 / NCIMB 13768 / 1H11).